Reading from the N-terminus, the 813-residue chain is LPS-assembly protein LptD (813 aa).

The interval 1–29 (MTEQRRSPNNRALPSPAPTSVPARARRAG) is disordered. Positions 1 to 52 (MTEQRRSPNNRALPSPAPTSVPARARRAGGLHAGALRPLVLAMASLSAGAHA) are cleaved as a signal peptide.

Belongs to the LptD family. In terms of assembly, component of the lipopolysaccharide transport and assembly complex. Interacts with LptE and LptA.

Its subcellular location is the cell outer membrane. Functionally, together with LptE, is involved in the assembly of lipopolysaccharide (LPS) at the surface of the outer membrane. The polypeptide is LPS-assembly protein LptD (Cupriavidus necator (strain ATCC 17699 / DSM 428 / KCTC 22496 / NCIMB 10442 / H16 / Stanier 337) (Ralstonia eutropha)).